A 373-amino-acid chain; its full sequence is Probable pectin lyase C (373 aa).

The first 18 residues, 1–18, serve as a signal peptide directing secretion; that stretch reads MKVPFLQLLCLNAALASA. Disulfide bonds link C81–C100 and C90–C220. N-linked (GlcNAc...) asparagine glycosylation is present at N123. R250 is an active-site residue. A disulfide bond links C316 and C324.

It belongs to the polysaccharide lyase 1 family.

It is found in the secreted. It carries out the reaction Eliminative cleavage of (1-&gt;4)-alpha-D-galacturonan methyl ester to give oligosaccharides with 4-deoxy-6-O-methyl-alpha-D-galact-4-enuronosyl groups at their non-reducing ends.. In terms of biological role, pectinolytic enzymes consist of four classes of enzymes: pectin lyase, polygalacturonase, pectin methylesterase and rhamnogalacturonase. Among pectinolytic enzymes, pectin lyase is the most important in depolymerization of pectin, since it cleaves internal glycosidic bonds of highly methylated pectins. This chain is Probable pectin lyase C (pelC), found in Aspergillus niger (strain ATCC MYA-4892 / CBS 513.88 / FGSC A1513).